A 433-amino-acid polypeptide reads, in one-letter code: Beta-agarase AgaA (433 aa).

The first 20 residues, 1–20 (MRKITSILLTCVMGCTATYA), serve as a signal peptide directing secretion. The region spanning 21–295 (ADWDGVPVPA…WVRFYKPVPI (275 aa)) is the GH16 domain. Residue glutamate 147 is the Nucleophile of the active site. The active-site Proton donor is glutamate 152. A CBM6 domain is found at 300-431 (TTVELGNFHN…QWNGDEIRFV (132 aa)).

Belongs to the glycosyl hydrolase 16 family. As to quaternary structure, monomer.

The protein localises to the periplasm. It catalyses the reaction Hydrolysis of (1-&gt;4)-beta-D-galactosidic linkages in agarose, giving the tetramer as the predominant product.. Its activity is regulated as follows. Activity is abolished by Hg(2+), Cu(2+), Pb(2+) and Zn(2+) ions, but is not affected by NaCl up to at least 1.0 M, Mg(2+), K(+) and Ca(2+). Not affected by iodoacetamide, p-chloromercuribenzoate, dithiothreitol, 2-mercaptoethanol, EDTA and sodium dodecyl sulfate. Inhibited by N-bromosuccinimide. In terms of biological role, endo-type beta-agarase, which produces neoagarotetraose (NA4) as the main final product, with a small amount of neoagarohexaose (NA6) and neoagarobiose (NA2). In Microbulbifer thermotolerans, this protein is Beta-agarase AgaA.